A 137-amino-acid chain; its full sequence is Nucleoside diphosphate kinase (137 aa).

Lys-11, Phe-59, Arg-87, Thr-93, Arg-104, and Asn-114 together coordinate ATP. Residue His-117 is the Pros-phosphohistidine intermediate of the active site.

This sequence belongs to the NDK family. As to quaternary structure, homotetramer. The cofactor is Mg(2+).

Its subcellular location is the cytoplasm. The enzyme catalyses a 2'-deoxyribonucleoside 5'-diphosphate + ATP = a 2'-deoxyribonucleoside 5'-triphosphate + ADP. It catalyses the reaction a ribonucleoside 5'-diphosphate + ATP = a ribonucleoside 5'-triphosphate + ADP. Major role in the synthesis of nucleoside triphosphates other than ATP. The ATP gamma phosphate is transferred to the NDP beta phosphate via a ping-pong mechanism, using a phosphorylated active-site intermediate. This chain is Nucleoside diphosphate kinase, found in Frankia casuarinae (strain DSM 45818 / CECT 9043 / HFP020203 / CcI3).